The chain runs to 159 residues: Probable histone H2A.5 (159 aa).

The segment covering 1 to 10 has biased composition (gly residues); that stretch reads MDAAGAGAGG. 2 disordered regions span residues 1–29 and 136–159; these read MDAA…KKAV and EKAA…PKKA. 2 stretches are compositionally biased toward basic residues: residues 11–29 and 148–159; these read KLKK…KKAV and PKKAAGKSPKKA. 2 short sequence motifs (SPKK motif) span residues 147–150 and 155–158; these read SPKK.

This sequence belongs to the histone H2A family. The nucleosome is a histone octamer containing two molecules each of H2A, H2B, H3 and H4 assembled in one H3-H4 heterotetramer and two H2A-H2B heterodimers. The octamer wraps approximately 147 bp of DNA.

It is found in the nucleus. The protein resides in the chromosome. Functionally, core component of nucleosome. Nucleosomes wrap and compact DNA into chromatin, limiting DNA accessibility to the cellular machineries which require DNA as a template. Histones thereby play a central role in transcription regulation, DNA repair, DNA replication and chromosomal stability. DNA accessibility is regulated via a complex set of post-translational modifications of histones, also called histone code, and nucleosome remodeling. In Oryza sativa subsp. indica (Rice), this protein is Probable histone H2A.5.